The following is a 146-amino-acid chain: uncharacterized protein (146 aa).

4 helical membrane-spanning segments follow: residues 1-21, 35-55, 87-107, and 111-131; these read MFANAGLSPFVAIWTARAASL, AAVYVGSAVVPAAVAGPLFVG, GGAGGWVGVHCPVVGGGGVGH, and AIAAAVSVHSTCMPAAFGGHL.

The protein localises to the cell membrane. This is an uncharacterized protein from Mycobacterium tuberculosis (strain CDC 1551 / Oshkosh).